A 2822-amino-acid chain; its full sequence is Piezo-type mechanosensitive ion channel component 2 (2822 aa).

Residues 1-12 (MASEVVCGLIFR) lie on the Cytoplasmic side of the membrane. A helical membrane pass occupies residues 13–24 (LLLPICLAVACA). Residues 25–30 (FRYNGL) are Extracellular-facing. Residues 31-43 (SFVYLIYLLLIPL) traverse the membrane as a helical segment. Residues 44-50 (FSEPTKA) lie on the Cytoplasmic side of the membrane. Residues 51 to 76 (TMQGHTGRLLQSLCITSLSFLLLHII) form a helical membrane-spanning segment. Over 77-122 (FHITLASLEAQHRITPAYNCSTWEKTFRQIGFESLKGADAGNGIRV) the chain is Extracellular. N-linked (GlcNAc...) asparagine glycosylation is present at N95. The chain crosses the membrane as a helical span at residues 123-141 (FVPDIGMFIASLTIWLVCR). Over 142–221 (TIVKKPDTEE…KEFIGNMITT (80 aa)) the chain is Cytoplasmic. The chain crosses the membrane as a helical span at residues 222–237 (AGKVVVTILLGSSGMM). The Extracellular segment spans residues 238–240 (LPS). The helical transmembrane segment at 241–258 (LTSAVYFFVFLGLCTWWS) threads the bilayer. Residues 259–264 (WCRTFD) are Cytoplasmic-facing. A helical transmembrane segment spans residues 265-287 (PLLFGCLCVLLAIFTAGHLIGLY). Residues 288–335 (LYQFQFFQEAVPPNDYYARLFGIKSVIQTDCASTWKIIVNPDLSWYHH) are Extracellular-facing. The chain crosses the membrane as a helical span at residues 336 to 355 (ANPILLLVMYYTLATLIRIW). The Cytoplasmic portion of the chain corresponds to 356–492 (LQEPLVQEEM…SVRMHAMVAV (137 aa)). A disordered region spans residues 450–481 (YRWEPSEESSEKKEEEEDKREDSEGEGSQEEK). The stretch at 455 to 482 (SEESSEKKEEEEDKREDSEGEGSQEEKR) forms a coiled coil. Residues 463–477 (EEEEDKREDSEGEGS) are compositionally biased toward acidic residues. A helical transmembrane segment spans residues 493 to 514 (FQFIMKQSYICALIAMMAWSIT). Over 515 to 519 (YHSWL) the chain is Extracellular. A helical transmembrane segment spans residues 520 to 531 (TFVLLIWSCTLW). At 532–535 (MIRN) the chain is on the cytoplasmic side. Residues 536-562 (RRKYAMISSPFMVVYANLLLVLQYIWS) traverse the membrane as a helical segment. At 563 to 583 (FELPEIKKVPGFLEKKEPGEL) the chain is on the extracellular side. The chain crosses the membrane as a helical span at residues 584–614 (ASKILFTITFWLLLRQHLTEQKALREKEALL). Residues 615–689 (SEVKIGSQEL…GNLVVALFIK (75 aa)) are Cytoplasmic-facing. Acidic residues-rich tracts occupy residues 624 to 633 (LEEKEDEELQ) and 643 to 652 (EKEEEEEEEI). The disordered stretch occupies residues 624-668 (LEEKEDEELQDVQVEGEPTEKEEEEEEEIKEERHEVKKEEEEEVE). Residues 653–662 (KEERHEVKKE) show a composition bias toward basic and acidic residues. The helical transmembrane segment at 690 to 703 (YWIYVCGGMFFFVS) threads the bilayer. The Extracellular portion of the chain corresponds to 704–709 (FEGKIV). A helical transmembrane segment spans residues 710–728 (MYKIIYMVLFLFCVALYQV). Over 729-737 (HYEWWRKIL) the chain is Cytoplasmic. A helical membrane pass occupies residues 738–757 (KYFWMSVVIYTMLVLIFIYT). Topologically, residues 758–789 (YQFENFPGLWQNMTGLKKEKLEDLGLKQFTVA) are extracellular. The chain crosses the membrane as a helical span at residues 790-811 (ELFTRIFIPTSFLLVCILHLHY). The Cytoplasmic segment spans residues 812-957 (FHDRFLELTD…QVFMWWILEL (146 aa)). S856 carries the phosphoserine modification. Residues 875-901 (QKLAESGEERPEECVKKTEKGEAGKDS) show a composition bias toward basic and acidic residues. The disordered stretch occupies residues 875 to 919 (QKLAESGEERPEECVKKTEKGEAGKDSDESEEEEDEEEESEEEES). The span at 902-919 (DESEEEEDEEEESEEEES) shows a compositional bias: acidic residues. The chain crosses the membrane as a helical span at residues 958–973 (HIIKIVSSYIIWVTVK). The Extracellular segment spans residues 974–979 (EVSLFN). Residues 980–989 (YVFLISWAFA) form a helical membrane-spanning segment. Topologically, residues 990-997 (LPYAKLRR) are cytoplasmic. Residues 998–1018 (AASSVCTVWTCVIIVCKMLYQ) traverse the membrane as a helical segment. The Extracellular portion of the chain corresponds to 1019-1074 (LQTIKPENFSVNCSLPNENQTNIPLHELNKSLLYSAPVDPTEWVGLRKSSPLLVYL). N1030 carries N-linked (GlcNAc...) asparagine glycosylation. A disulfide bridge connects residues C1031 and C1209. Residues 1075-1099 (RNNLLMLAILAFEVTVYRHQEYYRG) traverse the membrane as a helical segment. Over 1100–1140 (RNNLTAPVSKTIFHDITRLHLDDGLINCAKYFVNYFFYKFG) the chain is Cytoplasmic. Residues 1141–1155 (LETCFLMSVNVIGQR) traverse the membrane as a helical segment. Topologically, residues 1156 to 1157 (MD) are extracellular. The chain crosses the membrane as a helical span at residues 1158–1171 (FYAMIHACWLIGVL). The Cytoplasmic segment spans residues 1172–1182 (YRRRRKAIAEV). Residues 1183–1202 (WPKYCCFLACIITFQYFVCI) traverse the membrane as a helical segment. Topologically, residues 1203 to 1239 (GIPPAPCRDYPWRFKGAYFNDNIIKWLYFPDFIVRPN) are extracellular. The helical transmembrane segment at 1240-1260 (PVFLVYDFMLLLCASLQRQIF) threads the bilayer. Topologically, residues 1261–1314 (EDENKAAVRIMAGDNVEICMNLDAASFSQHNPVPDFIHCRSYLDMSKVIIFSYL) are cytoplasmic. Residues 1315 to 1327 (FWFVLTIIFITGT) form a helical membrane-spanning segment. Residues 1328 to 1333 (TRISIF) are Extracellular-facing. The chain crosses the membrane as a helical span at residues 1334 to 1346 (CMGYLVACFYFLL). At 1347-1355 (FGGDLLLKP) the chain is on the cytoplasmic side. Residues 1356–1381 (IKSILRYWDWLIAYNVFVITMKNILS) traverse the membrane as a helical segment. The Extracellular segment spans residues 1382 to 1430 (IGACGYIGALVRNSCWLIQAFSLACTVKGYQMPEDDSRCKLPSGEAGII). Residues 1431-1447 (WDSICFAFLLLQRRVFM) form a helical membrane-spanning segment. Residues 1448–1991 (SYYFLHVVAD…YAMYNTLVAR (544 aa)) are Cytoplasmic-facing. Positions 1475 to 1515 (TIVKAVKARIEEEKKSMDQLKRQMDRIKARQQKYKKGKERM) form a coiled coil. Disordered stretches follow at residues 1505-1551 (QQKY…KKKQ) and 1611-1653 (LRQR…KKSD). Residues 1611–1621 (LRQRRKEKKKL) show a composition bias toward basic residues. The span at 1622-1633 (AREEQKERRKGS) shows a compositional bias: basic and acidic residues. Residues 1992-2006 (SEMVCYFVIILNHMT) traverse the membrane as a helical segment. The Extracellular portion of the chain corresponds to 2007–2013 (SASIITL). A helical transmembrane segment spans residues 2014–2025 (LLPILIFLWAML). The Cytoplasmic portion of the chain corresponds to 2026–2031 (SVPRPS). Residues 2032 to 2053 (RRFWMMAIVYTEVAIVVKYFFQ) traverse the membrane as a helical segment. The Extracellular segment spans residues 2054 to 2086 (FGFFPWNKDLEIYKERPYFPPNIIGVEKKEGYV). The chain crosses the membrane as a helical span at residues 2087–2105 (LYDLIQLLALFFHRSILKC). Topologically, residues 2106 to 2259 (HGLWDEDDIV…HPDYSAVTDV (154 aa)) are cytoplasmic. Disordered stretches follow at residues 2120–2139 (DKEGSDDELSLDQGRRGSSD) and 2164–2205 (IRRK…SVLS). Over residues 2170–2197 (CSSSQISPRSSFSSNRSKRGSTSTRNSS) the composition is skewed to low complexity. A helical membrane pass occupies residues 2260 to 2279 (YVLMFLADTVDFIIIVFGFW). At 2280–2301 (AFGKHSAAADITSSLSEDQVPG) the chain is on the extracellular side. The chain crosses the membrane as a helical span at residues 2302 to 2322 (PFLVMVLIQFGTMVVDRALYL). At 2323–2326 (RKTV) the chain is on the cytoplasmic side. Residues 2327-2350 (LGKVIFQVILVFGIHFWMFFILPG) form a helical membrane-spanning segment. Residues 2351–2359 (VTERKFSQN) lie on the Extracellular side of the membrane. Residues 2360–2382 (LVAQLWYFVKCVYFGLSAYQIRC) traverse the membrane as a helical segment. The Cytoplasmic portion of the chain corresponds to 2383 to 2467 (GYPTRVLGNF…YPQPRGQKKK (85 aa)). Residues 2468-2491 (KAVKYGMGGMIIVLLICIVWFPLL) form a helical membrane-spanning segment. The Extracellular portion of the chain corresponds to 2492 to 2739 (FMSLIKSVAG…PSLGFLAGYG (248 aa)). N2692 is a glycosylation site (N-linked (GlcNAc...) asparagine). A helical membrane pass occupies residues 2740 to 2760 (IMGLYASVVLVIGKFVREFFS). Topologically, residues 2761 to 2822 (GISHSIMFEE…MIKWTREKTN (62 aa)) are cytoplasmic.

It belongs to the PIEZO (TC 1.A.75) family. Homotrimer; the homotrimer forms a propeller-shaped Piezo channel with a cation-ion conducting pore. Heterotrimeric interaction may occur between PIEZO1 and PIEZO2. Interacts with STOM13. Interacts with TMC7; the interaction inhibits PIEZO2-conducted mechanically activated currents. Interacts with TMC1; the interaction may be part of the MET complex. Interacts with MDFIC (via C-terminus); the interaction prolongs Piezo channel inactivation. Interacts with MDFI (via C-terminus); the interaction prolongs Piezo channel inactivation. As to expression, expressed in bladder, colon, and lung, but less abundant in kidney or skin. Strong expression is observed in dorsal root ganglia (DRG) sensory neurons. Expressed in a wide range of cutaneous low-threshold mechanoreceptors (LTMRs), including Merkel cells and Meissner's corpuscles. Expressed in sensory neurons. Expressed in cochlear inner and outer hair cells and vestibular organ hair cells. Expressed in pulmonary neuroepithelial cell bodies. Expressed in bladder urothelium and sensory neurons of the lower urinary tract. Expressed in sensory endings of proprioceptors innervating muscle spindles and Golgi tendon organs.

The protein resides in the cell membrane. The catalysed reaction is Ca(2+)(in) = Ca(2+)(out). Regulated by auxillary subunits MDFIC and MDFI. Channel activity is inhibited by TMEM120aa. Phosphatidic acid and lysophosphatidic acid inhibit Piezo2 channel activity. Its function is as follows. Pore-forming subunit of the mechanosensitive non-specific cation Piezo channel required for rapidly adapting mechanically activated (MA) currents and has a key role in sensing touch and tactile pain. Piezo channels are homotrimeric three-blade propeller-shaped structures that utilize a cap-motion and plug-and-latch mechanism to gate their ion-conducting pathways. Expressed in sensory neurons, is essential for diverse physiological processes, including respiratory control, systemic metabolism, urinary function, and proprioception. Mediates airway stretch sensing, enabling efficient respiration at birth and maintaining normal breathing in adults. It regulates brown and beige adipose tissue morphology and function, preventing systemic hypermetabolism. In the lower urinary tract, acts as a sensor in both the bladder urothelium and innervating sensory neurons and is required for bladder-stretch sensing and urethral micturition reflexes, ensuring proper urinary function. Additionally, Piezo2 serves as the principal mechanotransducer in proprioceptors, facilitating proprioception and coordinated body movements. In inner ear hair cells, PIEZO1/2 subunits may constitute part of the mechanotransducer (MET) non-selective cation channel complex where they may act as pore-forming ion-conducting component in the complex. Required for Merkel-cell mechanotransduction. Plays a major role in light-touch mechanosensation. The sequence is that of Piezo-type mechanosensitive ion channel component 2 from Mus musculus (Mouse).